The following is a 216-amino-acid chain: Thylakoid lumenal 16.5 kDa protein, chloroplastic (216 aa).

The N-terminal 38 residues, 1 to 38, are a transit peptide targeting the chloroplast; that stretch reads MAKSLLCSSTLNPFFSTTLSSSKKNQIAYSGNSKNQTS. The transit peptide at 39 to 73 directs the protein to the thylakoid; that stretch reads SSLLWKRRELSLGFMSSLVAIGLVSNDRRRHDANA.

It localises to the plastid. It is found in the chloroplast thylakoid lumen. The sequence is that of Thylakoid lumenal 16.5 kDa protein, chloroplastic from Arabidopsis thaliana (Mouse-ear cress).